We begin with the raw amino-acid sequence, 429 residues long: Ribosomal RNA small subunit methyltransferase B (429 aa).

S-adenosyl-L-methionine contacts are provided by residues 254–260 (CAAPGGK), Asp-277, Asp-303, and Asp-322. Cys-375 functions as the Nucleophile in the catalytic mechanism.

This sequence belongs to the class I-like SAM-binding methyltransferase superfamily. RsmB/NOP family.

It is found in the cytoplasm. The catalysed reaction is cytidine(967) in 16S rRNA + S-adenosyl-L-methionine = 5-methylcytidine(967) in 16S rRNA + S-adenosyl-L-homocysteine + H(+). In terms of biological role, specifically methylates the cytosine at position 967 (m5C967) of 16S rRNA. The protein is Ribosomal RNA small subunit methyltransferase B of Escherichia coli (strain SMS-3-5 / SECEC).